A 341-amino-acid polypeptide reads, in one-letter code: L-threonine 3-dehydrogenase (341 aa).

C38 contributes to the Zn(2+) binding site. Residues T40 and H43 each act as charge relay system in the active site. Zn(2+)-binding residues include H63, E64, C93, C96, C99, and C107. Residues I175, D195, R200, 262-264 (LGI), and 286-287 (IY) contribute to the NAD(+) site.

It belongs to the zinc-containing alcohol dehydrogenase family. As to quaternary structure, homotetramer. It depends on Zn(2+) as a cofactor.

The protein resides in the cytoplasm. It carries out the reaction L-threonine + NAD(+) = (2S)-2-amino-3-oxobutanoate + NADH + H(+). It functions in the pathway amino-acid degradation; L-threonine degradation via oxydo-reductase pathway; glycine from L-threonine: step 1/2. In terms of biological role, catalyzes the NAD(+)-dependent oxidation of L-threonine to 2-amino-3-ketobutyrate. The polypeptide is L-threonine 3-dehydrogenase (Proteus mirabilis (strain HI4320)).